The following is an 866-amino-acid chain: Thiamine diphosphate dependent-3-acetyloctanal synthase PigD (866 aa).

A disordered region spans residues 826-866 (KGWQRDPSDREALQERKDWAARQPESTSTSFDQGQNKEAIS). The segment covering 828–845 (WQRDPSDREALQERKDWA) has biased composition (basic and acidic residues). Polar residues predominate over residues 849-866 (PESTSTSFDQGQNKEAIS).

The protein belongs to the TPP enzyme family. The cofactor is thiamine diphosphate.

The catalysed reaction is (2E)-octenal + pyruvate + H(+) = (S)-3-acetyloctanal + CO2. Its pathway is antibiotic biosynthesis; prodigiosin biosynthesis. In terms of biological role, involved in the biosynthesis of 2-methyl-3-n-amyl-pyrrole (MAP), one of the terminal products involved in the biosynthesis of the red antibiotic prodigiosin (Pig). Catalyzes the decarboxylation of pyruvate, followed by the modification of the resulting two-carbon fragment acetaldehyde at the C3 position of the 2-octenal (1,2-addition of acetaldehyde) giving 3-acetyloctanal. The sequence is that of Thiamine diphosphate dependent-3-acetyloctanal synthase PigD from Serratia sp. (strain ATCC 39006) (Prodigiosinella confusarubida).